The chain runs to 582 residues: 5-aminolevulinate synthase, erythroid-specific, mitochondrial (582 aa).

Arg158 serves as a coordination point for succinyl-CoA. Residues Cys253 and Phe254 each contribute to the pyridoxal 5'-phosphate site. Residues Ser275 and Arg294 each contribute to the succinyl-CoA site. 3 residues coordinate pyridoxal 5'-phosphate: Ser327, His355, and Thr383. Lys386 is an active-site residue. At Lys386 the chain carries N6-(pyridoxal phosphate)lysine. Pyridoxal 5'-phosphate-binding residues include Thr415 and Thr416. Residue Thr503 coordinates succinyl-CoA.

Belongs to the class-II pyridoxal-phosphate-dependent aminotransferase family. Homodimer. The cofactor is pyridoxal 5'-phosphate.

The protein resides in the mitochondrion inner membrane. It carries out the reaction succinyl-CoA + glycine + H(+) = 5-aminolevulinate + CO2 + CoA. It participates in porphyrin-containing compound metabolism; protoporphyrin-IX biosynthesis; 5-aminolevulinate from glycine: step 1/1. Catalyzes the pyridoxal 5'-phosphate (PLP)-dependent condensation of succinyl-CoA and glycine to form aminolevulinic acid (ALA), with CoA and CO2 as by-products. Contributes significantly to heme formation during erythropoiesis. In Opsanus tau (Oyster toadfish), this protein is 5-aminolevulinate synthase, erythroid-specific, mitochondrial (alas2).